A 301-amino-acid polypeptide reads, in one-letter code: Acetyl-coenzyme A carboxylase carboxyl transferase subunit beta (301 aa).

The CoA carboxyltransferase N-terminal domain maps to 25–294; it reads LWIKDPSTGE…NSDAPEHEKT (270 aa). Positions 282–301 are disordered; sequence QPGNSDAPEHEKTEATDKAA. A compositionally biased stretch (basic and acidic residues) spans 288–301; sequence APEHEKTEATDKAA.

Belongs to the AccD/PCCB family. As to quaternary structure, acetyl-CoA carboxylase is a heterohexamer composed of biotin carboxyl carrier protein (AccB), biotin carboxylase (AccC) and two subunits each of ACCase subunit alpha (AccA) and ACCase subunit beta (AccD).

Its subcellular location is the cytoplasm. The catalysed reaction is N(6)-carboxybiotinyl-L-lysyl-[protein] + acetyl-CoA = N(6)-biotinyl-L-lysyl-[protein] + malonyl-CoA. Its pathway is lipid metabolism; malonyl-CoA biosynthesis; malonyl-CoA from acetyl-CoA: step 1/1. Functionally, component of the acetyl coenzyme A carboxylase (ACC) complex. Biotin carboxylase (BC) catalyzes the carboxylation of biotin on its carrier protein (BCCP) and then the CO(2) group is transferred by the transcarboxylase to acetyl-CoA to form malonyl-CoA. The polypeptide is Acetyl-coenzyme A carboxylase carboxyl transferase subunit beta (Brucella anthropi (strain ATCC 49188 / DSM 6882 / CCUG 24695 / JCM 21032 / LMG 3331 / NBRC 15819 / NCTC 12168 / Alc 37) (Ochrobactrum anthropi)).